We begin with the raw amino-acid sequence, 93 residues long: uncharacterized protein (93 aa).

It belongs to the SIMIBI class G3E GTPase family. ArgK/MeaB subfamily.

This is an uncharacterized protein from Streptomyces virginiae (Streptomyces cinnamonensis).